A 219-amino-acid polypeptide reads, in one-letter code: Probable glutathione S-transferase MSR-1 (219 aa).

The GST N-terminal domain occupies 4-83 (NNVVLLDFSG…YIDEVWHEKC (80 aa)). Residues Ser14, Lys41, Ile55, and 67–68 (ES) each bind glutathione. The GST C-terminal domain maps to 89–208 (DPYQRSQARF…LPHPHKIYDF (120 aa)).

Belongs to the GST superfamily. HSP26 family.

It carries out the reaction RX + glutathione = an S-substituted glutathione + a halide anion + H(+). Functionally, may play an important role in hormonal and growth regulatory responses. This Nicotiana plumbaginifolia (Leadwort-leaved tobacco) protein is Probable glutathione S-transferase MSR-1 (MSR-1).